Here is a 735-residue protein sequence, read N- to C-terminus: Translation initiation factor IF-2, chloroplastic (735 aa).

The tr-type G domain maps to 239–411 (RRAPIVTILG…ILLMADIENY (173 aa)). The segment at 248-255 (GHVDHGKT) is G1. Position 248 to 255 (248 to 255 (GHVDHGKT)) interacts with GTP. A G2 region spans residues 273-277 (GITQK). The segment at 298 to 301 (DTPG) is G3. Residues 298 to 302 (DTPGH) and 352 to 355 (NKID) contribute to the GTP site. Positions 352–355 (NKID) are G4. A G5 region spans residues 388–390 (SAS).

It belongs to the TRAFAC class translation factor GTPase superfamily. Classic translation factor GTPase family. IF-2 subfamily.

It localises to the plastid. Its subcellular location is the chloroplast. One of the essential components for the initiation of protein synthesis. Protects formylmethionyl-tRNA from spontaneous hydrolysis and promotes its binding to the 30S ribosomal subunits. Also involved in the hydrolysis of GTP during the formation of the 70S ribosomal complex. The polypeptide is Translation initiation factor IF-2, chloroplastic (infB) (Guillardia theta (Cryptophyte)).